The following is an 88-amino-acid chain: Selenoprotein W (88 aa).

A cross-link (cysteinyl-selenocysteine (Cys-Sec); redox-active) is located at residues 10 to 13 (CGAU). Residue Sec-13 is a non-standard amino acid, selenocysteine. The residue at position 37 (Cys-37) is an S-glutathionyl cysteine.

The protein belongs to the SelWTH family. Selenoprotein W subfamily. Interacts with DPYSL2, PRDX1, YWHAB, YWHAG, HSP70 and HSP90. In the embryo, expressed in the developing nervous system and in mesoderm-derived tissues such as heart and limbs. In the adult, predominantly expressed in brain, skeletal muscle and heart.

The protein localises to the cytoplasm. Plays a role as a glutathione (GSH)-dependent antioxidant. May be involved in a redox-related process. May play a role in the myopathies of selenium deficiency. The protein is Selenoprotein W of Mus musculus (Mouse).